The primary structure comprises 348 residues: GMP reductase 2 (348 aa).

NADP(+) contacts are provided by residues 26 to 27, lysine 78, 129 to 131, and 180 to 181; these read SR, DVA, and IG. Glycine 181, glycine 183, and cysteine 186 together coordinate K(+). Cysteine 186 (thioimidate intermediate) is an active-site residue. Threonine 188 acts as the Proton donor/acceptor in catalysis. Arginine 189 serves as a coordination point for K(+). Residues 219–221, 242–243, 268–270, and 286–290 each bind GMP; these read DGG, GG, GMS, and RASEG. NADP(+) is bound by residues methionine 269 and 285 to 286; that span reads YR. Lysine 291 carries the post-translational modification N6-acetyllysine. 314-317 is a binding site for NADP(+); that stretch reads STCT.

Belongs to the IMPDH/GMPR family. GuaC type 1 subfamily. As to quaternary structure, homotetramer. As to expression, highly expressed in heart, skeletal muscle, kidney, brain, liver, prostate, spleen, placenta, testis and ovary. Low expression in colon, thymus and peripheral blood leukocytes.

It carries out the reaction IMP + NH4(+) + NADP(+) = GMP + NADPH + 2 H(+). Its function is as follows. Catalyzes the irreversible NADPH-dependent deamination of GMP to IMP. It functions in the conversion of nucleobase, nucleoside and nucleotide derivatives of G to A nucleotides, and in maintaining the intracellular balance of A and G nucleotides. Plays a role in modulating cellular differentiation. This Homo sapiens (Human) protein is GMP reductase 2.